Consider the following 264-residue polypeptide: Glutamate racemase (264 aa).

Substrate contacts are provided by residues 12 to 13 and 44 to 45; these read DS and YG. The active-site Proton donor/acceptor is Cys75. 76–77 serves as a coordination point for substrate; the sequence is NT. Cys186 functions as the Proton donor/acceptor in the catalytic mechanism. A substrate-binding site is contributed by 187 to 188; it reads TH.

It belongs to the aspartate/glutamate racemases family.

The enzyme catalyses L-glutamate = D-glutamate. It functions in the pathway cell wall biogenesis; peptidoglycan biosynthesis. Provides the (R)-glutamate required for cell wall biosynthesis. This is Glutamate racemase from Stutzerimonas stutzeri (strain A1501) (Pseudomonas stutzeri).